A 253-amino-acid chain; its full sequence is Chloride intracellular channel protein 4 (253 aa).

N-acetylalanine is present on alanine 2. The segment at 2–101 (ALSMPLNGLK…EEFLEEVLCP (100 aa)) is required for insertion into the membrane. Serine 4 is modified (phosphoserine). Lysine 24 carries the post-translational modification N6-acetyllysine. The G-site signature appears at 35-38 (CPFS). A helical transmembrane segment spans residues 37-57 (FSQRLFMILWLKGVVFSVTTV). Positions 81 to 244 (NSEVKTDVNK…PSDKEVEIAY (164 aa)) constitute a GST C-terminal domain. Residue lysine 130 is modified to N6-acetyllysine. Phosphoserine is present on residues serine 132, serine 167, and serine 236. At tyrosine 244 the chain carries Phosphotyrosine.

Belongs to the chloride channel CLIC family. Component of a multimeric complex consisting of several cytoskeletal proteins, including actin, ezrin, alpha-actinin, gelsolin, IQGAP1 and CLIC5A. Binds directly to brain dynamin I in a complex containing actin, tubulin and 14-3-3 isoforms. Monomer. Interacts with HRH3. Interacts with AKAP9. As to expression, detected in epithelial cells from colon, esophagus and kidney (at protein level). Expression is prominent in heart, kidney, placenta and skeletal muscle.

The protein resides in the cytoplasm. It localises to the cytoskeleton. The protein localises to the microtubule organizing center. It is found in the centrosome. Its subcellular location is the cytoplasmic vesicle membrane. The protein resides in the nucleus. It localises to the cell membrane. The protein localises to the mitochondrion. It is found in the cell junction. Its subcellular location is the endoplasmic reticulum membrane. The catalysed reaction is chloride(in) = chloride(out). The enzyme catalyses thiocyanate(in) = thiocyanate(out). It catalyses the reaction nitrate(in) = nitrate(out). It carries out the reaction iodide(out) = iodide(in). The catalysed reaction is bromide(in) = bromide(out). The enzyme catalyses fluoride(in) = fluoride(out). It catalyses the reaction choline(out) = choline(in). Its activity is regulated as follows. Inhibited by rapamycin, amphotericin B and IAA-94. In the soluble state, catalyzes glutaredoxin-like thiol disulfide exchange reactions with reduced glutathione as electron donor. Can insert into membranes and form voltage-dependent multi-ion conductive channels. Membrane insertion seems to be redox-regulated and may occur only under oxidizing conditions. Has alternate cellular functions like a potential role in angiogenesis or in maintaining apical-basolateral membrane polarity during mitosis and cytokinesis. Could also promote endothelial cell proliferation and regulate endothelial morphogenesis (tubulogenesis). Promotes cell-surface expression of HRH3. The sequence is that of Chloride intracellular channel protein 4 from Homo sapiens (Human).